A 412-amino-acid chain; its full sequence is Transcription factor NIGT1 (412 aa).

Disordered regions lie at residues Met-54–Ala-241, Lys-286–Pro-310, and Ala-358–Ala-412. The span at Glu-90–Ser-112 shows a compositional bias: basic and acidic residues. Residues Ala-183–Thr-193 show a composition bias toward low complexity. Basic and acidic residues predominate over residues Ser-198–Gly-228. In terms of domain architecture, HTH myb-type spans Pro-232–Arg-292. A DNA-binding region (H-T-H motif) is located at residues Pro-263 to Arg-288. Over residues Ser-383–Asp-392 the composition is skewed to basic and acidic residues. Residues Asp-395 to Ala-412 are compositionally biased toward low complexity.

It is found in the nucleus. Its function is as follows. Transcriptional repressor that may play a role in response to nitrogen. May be involved in a time-dependent signaling for transcriptional regulation of nitrate-responsive genes. Binds specifically to the DNA sequence motif 5'-GAATC-3' or 5'-GAATATTC-3'. Represses the activity of its own promoter trough binding to these motifs. The chain is Transcription factor NIGT1 from Oryza sativa subsp. japonica (Rice).